The sequence spans 335 residues: UPF0353 protein MLBr01808 (335 aa).

Helical transmembrane passes span 18–38 and 67–87; these read WFFLFIFIVFGLAAFYVMMQV and VPAILLMLALLLFTIAMAGPT. A VWFA domain is found at 98–294; sequence VVMLVIDVSQ…AELKAVYASL (197 aa). Residues 309-329 form a helical membrane-spanning segment; the sequence is AGWLRLGVLVLALAALTALLI.

This sequence belongs to the UPF0353 family.

The protein localises to the cell membrane. The polypeptide is UPF0353 protein MLBr01808 (Mycobacterium leprae (strain Br4923)).